The following is a 148-amino-acid chain: UPF0758 protein YeeS (148 aa).

The MPN domain maps to 26-148 (AFTSTRAARE…VFSFAEHGLL (123 aa)). H97, H99, and D110 together coordinate Zn(2+). A JAMM motif motif is present at residues 97 to 110 (HNHPSGEVTPSKAD).

It belongs to the UPF0758 family.

This chain is UPF0758 protein YeeS (yeeS), found in Escherichia coli (strain K12).